Reading from the N-terminus, the 193-residue chain is Putative anthranilate synthase component II (193 aa).

The region spanning 2–193 (KLLIINNHDS…WLAIPPTTNP (192 aa)) is the Glutamine amidotransferase type-1 domain. Residues Cys-78, His-168, and Glu-170 contribute to the active site.

In terms of assembly, tetramer of two components I and two components II.

The enzyme catalyses chorismate + L-glutamine = anthranilate + pyruvate + L-glutamate + H(+). It participates in amino-acid biosynthesis; L-tryptophan biosynthesis; L-tryptophan from chorismate: step 1/5. The protein is Putative anthranilate synthase component II of Haemophilus influenzae (strain ATCC 51907 / DSM 11121 / KW20 / Rd).